Consider the following 333-residue polypeptide: MQQEALSFLSSSLPSLHHNFPSLSRLRFNNFPALSFKPNTSSSSSSFFKSPDIPSLSSTTTTTTTTETLESSIHEKLIYLDSLGIDFLTLINRHPPLLSTALSAVESVVDYMTTPPINFTLQDFRRLVSMCPELLTSPLTSHTIPVITFLLREVGVDSIFDLRQALRRRPRLLACSVDHQLRPTLYFLQRIGILDPHKHTYLLSCSVDNKLVPRIDYFEKLGFSRRSATAMFKRFPQLFNYSIAENYEPKLKYLMVEMGRDVREVLEFPQYFSFSLENRIKPRHEACAAKGVRFPLPVMLKTNEAGFRDTLEVCCDSSPPLKTSRLVTVQKDS.

The transit peptide at 1–55 directs the protein to the chloroplast; sequence MQQEALSFLSSSLPSLHHNFPSLSRLRFNNFPALSFKPNTSSSSSSFFKSPDIPS. The disordered stretch occupies residues 38-67; sequence PNTSSSSSSFFKSPDIPSLSSTTTTTTTTE.

This sequence belongs to the mTERF family. Self-interacts. Associates with the plastid-encoded RNA polymerase (PEP) complex. Interacts directly with PTAC7/PAP12, PTAC12/HMR/PAP5 and PTAC14/PAP7. As to expression, expressed in green aerial tissues such as cotyledons, leaves, flowers and siliques, but not in roots.

It localises to the plastid. The protein localises to the chloroplast stroma. The protein resides in the chloroplast nucleoid. In terms of biological role, transcription termination factor required for chloroplast gene expression and protein synthesis in chloroplasts. Necessary for chloroplast photosynthetic complexes assembly by modulating the accumulation of photosynthetic proteins. Essential for embryogenesis. The polypeptide is Protein SEEDLING LETHAL 1, chloroplastic (Arabidopsis thaliana (Mouse-ear cress)).